A 351-amino-acid polypeptide reads, in one-letter code: D-alanine--D-alanine ligase (351 aa).

The ATP-grasp domain occupies N135 to E343. L167–S222 contributes to the ATP binding site. Mg(2+) contacts are provided by D298, E310, and N312.

Belongs to the D-alanine--D-alanine ligase family. Mg(2+) is required as a cofactor. Mn(2+) serves as cofactor.

It localises to the cytoplasm. The enzyme catalyses 2 D-alanine + ATP = D-alanyl-D-alanine + ADP + phosphate + H(+). The protein operates within cell wall biogenesis; peptidoglycan biosynthesis. In terms of biological role, cell wall formation. The protein is D-alanine--D-alanine ligase of Leptospira interrogans serogroup Icterohaemorrhagiae serovar copenhageni (strain Fiocruz L1-130).